Reading from the N-terminus, the 399-residue chain is F420-dependent formate dehydrogenase subunit beta (399 aa).

4Fe-4S ferredoxin-type domains lie at 287-307 (TEYMDDFSRCLKCYGCREACP) and 339-367 (ERMLHMVESCTNCGQCEEVCPGEIPLAKI). Residues C296, C299, C302, C306, C348, C351, C354, and C358 each contribute to the [4Fe-4S] cluster site.

It belongs to the FrhB family. As to quaternary structure, dimer of an alpha (FdhA) and a beta (FdhB) subunit. Requires [4Fe-4S] cluster as cofactor. It depends on FAD as a cofactor. Zn(2+) serves as cofactor.

The enzyme catalyses oxidized coenzyme F420-(gamma-L-Glu)(n) + formate + 2 H(+) = reduced coenzyme F420-(gamma-L-Glu)(n) + CO2. With respect to regulation, is extremely sensitive to oxygen. Contains a FAD that is required for coenzyme F420-dependent activity but not for methyl viologen-dependent activity. Preincubation of the FAD-depleted enzyme with FAD restores coenzyme F420-dependent activity. Neither FMN nor FADH2 can replace FAD. Strongly inhibited by cyanide, azide, alpha,alpha-dipyridyl and 1,10-phenanthroline. In terms of biological role, catalyzes the oxidation of formate to carbon dioxide, with coenzyme F420 as the electron acceptor. In vitro can also use methyl viologen, 7,8-didemethyl-8-hydroxy-5-deazariboflavin (or FO, a hydrolytic derivative of coenzyme F420), FMN and FAD as electron acceptors, but not NAD(+) or NADP(+). This chain is F420-dependent formate dehydrogenase subunit beta, found in Methanobacterium formicicum.